The chain runs to 107 residues: Iron-binding protein IscA (107 aa).

Residues cysteine 35, cysteine 99, and cysteine 101 each contribute to the Fe cation site.

Belongs to the HesB/IscA family. In terms of assembly, homodimer; may form tetramers and higher multimers. The cofactor is Fe cation.

In terms of biological role, is able to transfer iron-sulfur clusters to apo-ferredoxin. Multiple cycles of [2Fe2S] cluster formation and transfer are observed, suggesting that IscA acts catalytically. Recruits intracellular free iron so as to provide iron for the assembly of transient iron-sulfur cluster in IscU in the presence of IscS, L-cysteine and the thioredoxin reductase system TrxA/TrxB. This Photorhabdus laumondii subsp. laumondii (strain DSM 15139 / CIP 105565 / TT01) (Photorhabdus luminescens subsp. laumondii) protein is Iron-binding protein IscA.